The chain runs to 423 residues: Deferrochelatase (423 aa).

The segment at residues methionine 1–alanine 35 is a signal peptide (tat-type signal). A heme b-binding site is contributed by glycine 236–alanine 238. Protoporphyrin IX-binding positions include glycine 236–alanine 238 and arginine 296. Residues histidine 329, asparagine 334–arginine 336, and arginine 347 contribute to the heme b site.

In terms of assembly, homodimer. Part of a ferrous iron transporter composed of EfeU, EfeO and EfeB. However, this EfeUOB tripartite iron transporter is defective in E.coli strain K12 due to a frameshift mutation in EfeU. The cofactor is heme b. Exported by the Tat system. The position of the signal peptide cleavage has been experimentally proven. Can also be exported by the Sec system.

It localises to the periplasm. It carries out the reaction heme b + 2 H(+) = protoporphyrin IX + Fe(2+). In terms of biological role, involved in the recovery of exogenous heme iron. Extracts iron from heme while preserving the protoporphyrin ring intact. Also displays peroxidase activity on guaiacol in vitro. The sequence is that of Deferrochelatase (efeB) from Escherichia coli (strain K12).